Consider the following 20-residue polypeptide: Phenol-soluble modulin alpha 4 peptide (20 aa).

It belongs to the phenol-soluble modulin alpha peptides family.

Functionally, peptide which can recruit, activate and subsequently lyse neutrophils, thus eliminating the main cellular defense against infection. The protein is Phenol-soluble modulin alpha 4 peptide (psmA4) of Staphylococcus aureus (strain bovine RF122 / ET3-1).